Reading from the N-terminus, the 873-residue chain is ASGQLHRPQPQEHTSTSAAAGTWRLTQASESRHRLPHCSAAPSHQDHSAMGFGPELWCPKGHTELLRLQDSELRLLELMKKWMSQRAKSDREYAGMLHHMFSQLEKQEGLGHLRATDHSSQIGESWWVLASQTETLSQTLRRHAEELAAGPLAKLSILIRDKQQLRKVFSEQWQQLSQEYAWTTQQEVEKLKAQYRSLVRDSTQAKRKYQEASKDKEREKAKEKYVRSLSKLYALHNQYVLAVQAAALHHHHHYQRALPTLHESLYSLQQEMVLVLKEILGEYCSITSLVQEDVLAIHQKVAHAVEMIDPATEYSSFVQCHRYDSEVPPAVTFDESLLEEAENLEPGELQLNELTIESVQHSLTSIEEELLASRKAVSSKEQRVWELQVELRGEELALSPGERVHLLGKRQGLREAQQQLQGLVCAQAKLQAQRDMLANKLAELGSEEPPPALPLQEDRQSARSTDQERSGVTALKTIKNHISGIFSPRFSLPPPVPLIPEVQKPLCQQAWYHGAIPRSEVQELLKYSGDFLVRESQGKQEYVLSVLWDGQPRHFIIQAADNLYRLEDDGLPTIPLLIDHLLQSQRPITRKSGIVLTRAVLKDKWVLNHEDVLLGERIGRGNFGEVFSGRLRADNTPVAVKSCRETLPPELKAKFLQEARILKQCNHPNIVRLIGVCTQKQPIYIVMELVQGGDFLSFLRSKGPRLKMKKLIKMMENAAAGMEYLESKHCIHRDLAARNCLVTEKNTLKISDFGMSRQEEDGVYASTGGMKQIPVKWTAPEALNYGWYSSESDVWSFGILLWEAFSLGAVPYANLSNQQTREAIEQGVRLEPPEQCPEDVYRLMQRCWEYDPHRRPSFGAVHQDLIAIRKRHR.

A disordered region spans residues 1–46 (ASGQLHRPQPQEHTSTSAAAGTWRLTQASESRHRLPHCSAAPSHQD). The segment covering 11–29 (QEHTSTSAAAGTWRLTQAS) has biased composition (polar residues). An F-BAR domain is found at 50–313 (MGFGPELWCP…AVEMIDPATE (264 aa)). The segment at 445–471 (GSEEPPPALPLQEDRQSARSTDQERSG) is disordered. A compositionally biased stretch (basic and acidic residues) spans 456–469 (QEDRQSARSTDQER). Positions 511–600 (WYHGAIPRSE…KSGIVLTRAV (90 aa)) constitute an SH2 domain. Residues 612 to 865 (VLLGERIGRG…PSFGAVHQDL (254 aa)) form the Protein kinase domain. ATP contacts are provided by residues 618–626 (IGRGNFGEV) and Lys641. Catalysis depends on Asp734, which acts as the Proton acceptor. At Tyr764 the chain carries Phosphotyrosine; by autocatalysis.

Belongs to the protein kinase superfamily. Tyr protein kinase family. Fes/fps subfamily.

It catalyses the reaction L-tyrosyl-[protein] + ATP = O-phospho-L-tyrosyl-[protein] + ADP + H(+). The sequence is that of Tyrosine-protein kinase transforming protein Fps (V-FPS) from Gallus gallus (Chicken).